Consider the following 743-residue polypeptide: Ribosome biogenesis protein BOP1 homolog (743 aa).

WD repeat units follow at residues 365–404 (GHTATVRSVSVSPNGQYLATGCDDHLVRVYEVQTGRLMKR), 575–615 (KFSE…RRFK), 617–655 (SGGVTTCLSIHPEGDNFLVGDTTSHTSWFDMDFSDKPYK), 659–701 (SHKG…DYNK), and 712–743 (KHQRSVYAVAWHPSLAWLFTSTEDGVVTAWTE).

It belongs to the WD repeat BOP1/ERB1 family.

The protein localises to the nucleus. The protein resides in the nucleolus. Its subcellular location is the nucleoplasm. Its function is as follows. Required for maturation of ribosomal RNAs and formation of the large ribosomal subunit. This is Ribosome biogenesis protein BOP1 homolog from Leishmania braziliensis.